The chain runs to 63 residues: Conotoxin Vi5.1a (63 aa).

Residues 1 to 22 (MRCVPVFIILLLLIPSAPSADA) form the signal peptide. Positions 23-50 (QPKTKDDVPLASYHDNAERTLQRLWNQR) are excised as a propeptide. Proline 62 is modified (proline amide).

Belongs to the conotoxin T superfamily. In terms of processing, contains 2 disulfide bonds that can be either 'C1-C3, C2-C4' or 'C1-C4, C2-C3', since these disulfide connectivities have been observed for conotoxins with cysteine framework V (for examples, see AC P0DQQ7 and AC P81755). As to expression, expressed by the venom duct.

The protein localises to the secreted. This is Conotoxin Vi5.1a from Conus virgo (Virgin cone).